The chain runs to 198 residues: Neutrophil gelatinase-associated lipocalin (198 aa).

Residues 1–20 (MPLGLLWLGLALLGALHAQA) form the signal peptide. Gln-21 carries the post-translational modification Pyrrolidone carboxylic acid. Position 72 to 74 (72 to 74 (YAT)) interacts with a carboxymycobactin. N-linked (GlcNAc...) asparagine glycosylation occurs at Asn-85. A disulfide bridge connects residues Cys-96 and Cys-195. Tyr-126 contributes to the enterobactin binding site. 3 residues coordinate a carboxymycobactin: Lys-145, Lys-154, and Tyr-158. Position 154 (Lys-154) interacts with enterobactin.

This sequence belongs to the calycin superfamily. Lipocalin family. Monomer. Homodimer; disulfide-linked. Heterodimer; disulfide-linked with MMP9. In terms of tissue distribution, detected in neutrophils (at protein level). Expressed in bone marrow and in tissues that are prone to exposure to microorganism. High expression is found in bone marrow as well as in uterus, prostate, salivary gland, stomach, appendix, colon, trachea and lung. Expressed in the medullary tubules of the kidney. Not found in the small intestine or peripheral blood leukocytes.

The protein localises to the secreted. It localises to the cytoplasmic granule lumen. The protein resides in the cytoplasmic vesicle lumen. Functionally, iron-trafficking protein involved in multiple processes such as apoptosis, innate immunity and renal development. Binds iron through association with 2,3-dihydroxybenzoic acid (2,3-DHBA), a siderophore that shares structural similarities with bacterial enterobactin, and delivers or removes iron from the cell, depending on the context. Iron-bound form (holo-24p3) is internalized following binding to the SLC22A17 (24p3R) receptor, leading to release of iron and subsequent increase of intracellular iron concentration. In contrast, association of the iron-free form (apo-24p3) with the SLC22A17 (24p3R) receptor is followed by association with an intracellular siderophore, iron chelation and iron transfer to the extracellular medium, thereby reducing intracellular iron concentration. Involved in apoptosis due to interleukin-3 (IL3) deprivation: iron-loaded form increases intracellular iron concentration without promoting apoptosis, while iron-free form decreases intracellular iron levels, inducing expression of the proapoptotic protein BCL2L11/BIM, resulting in apoptosis. Involved in innate immunity; limits bacterial proliferation by sequestering iron bound to microbial siderophores, such as enterobactin. Can also bind siderophores from M.tuberculosis. This chain is Neutrophil gelatinase-associated lipocalin (LCN2), found in Homo sapiens (Human).